Here is a 363-residue protein sequence, read N- to C-terminus: Anhydro-N-acetylmuramic acid kinase (363 aa).

Gly-9–Asp-16 is an ATP binding site.

The protein belongs to the anhydro-N-acetylmuramic acid kinase family.

It carries out the reaction 1,6-anhydro-N-acetyl-beta-muramate + ATP + H2O = N-acetyl-D-muramate 6-phosphate + ADP + H(+). The protein operates within amino-sugar metabolism; 1,6-anhydro-N-acetylmuramate degradation. Its pathway is cell wall biogenesis; peptidoglycan recycling. Catalyzes the specific phosphorylation of 1,6-anhydro-N-acetylmuramic acid (anhMurNAc) with the simultaneous cleavage of the 1,6-anhydro ring, generating MurNAc-6-P. Is required for the utilization of anhMurNAc either imported from the medium or derived from its own cell wall murein, and thus plays a role in cell wall recycling. The sequence is that of Anhydro-N-acetylmuramic acid kinase from Nitrosomonas europaea (strain ATCC 19718 / CIP 103999 / KCTC 2705 / NBRC 14298).